The following is a 967-amino-acid chain: Leucine--tRNA ligase (967 aa).

The short motif at 43–53 (PYLSGHLHVGH) is the 'HIGH' region element. Residues 650-654 (KMSKS) carry the 'KMSKS' region motif. Lysine 653 is an ATP binding site.

Belongs to the class-I aminoacyl-tRNA synthetase family.

It localises to the cytoplasm. The enzyme catalyses tRNA(Leu) + L-leucine + ATP = L-leucyl-tRNA(Leu) + AMP + diphosphate. This Pyrococcus furiosus (strain ATCC 43587 / DSM 3638 / JCM 8422 / Vc1) protein is Leucine--tRNA ligase.